We begin with the raw amino-acid sequence, 455 residues long: Asparagine--tRNA ligase (455 aa).

Belongs to the class-II aminoacyl-tRNA synthetase family. Homodimer.

The protein resides in the cytoplasm. It carries out the reaction tRNA(Asn) + L-asparagine + ATP = L-asparaginyl-tRNA(Asn) + AMP + diphosphate + H(+). In Mycoplasma pneumoniae (strain ATCC 29342 / M129 / Subtype 1) (Mycoplasmoides pneumoniae), this protein is Asparagine--tRNA ligase.